A 170-amino-acid chain; its full sequence is Large ribosomal subunit protein uL6m (170 aa).

This sequence belongs to the universal ribosomal protein uL6 family.

It is found in the mitochondrion. This Dictyostelium discoideum (Social amoeba) protein is Large ribosomal subunit protein uL6m (mrpl6).